We begin with the raw amino-acid sequence, 119 residues long: Large ribosomal subunit protein uL22 (119 aa).

This sequence belongs to the universal ribosomal protein uL22 family. As to quaternary structure, part of the 50S ribosomal subunit.

This protein binds specifically to 23S rRNA; its binding is stimulated by other ribosomal proteins, e.g. L4, L17, and L20. It is important during the early stages of 50S assembly. It makes multiple contacts with different domains of the 23S rRNA in the assembled 50S subunit and ribosome. Functionally, the globular domain of the protein is located near the polypeptide exit tunnel on the outside of the subunit, while an extended beta-hairpin is found that lines the wall of the exit tunnel in the center of the 70S ribosome. The sequence is that of Large ribosomal subunit protein uL22 from Rickettsia conorii (strain ATCC VR-613 / Malish 7).